Consider the following 135-residue polypeptide: NNCPQDWLPMNGLCYKIFDELKAWKDAEMFCRKYKPGCHLASIHLYGESPEIAEYISDYHKGQSEVWIGLWDEKKDFSWEWTDRSCTDYLSWDKNQPDHYKNKEFCVELVSYTGYRLWNDQVCESKNAFLCQCKF.

Disulfide bonds link Cys3–Cys14, Cys31–Cys131, Cys38–Cys133, and Cys106–Cys123. Residues 10–132 (MNGLCYKIFD…CESKNAFLCQ (123 aa)) enclose the C-type lectin domain. Ca(2+) is bound by residues Gln96, Asp98, Glu104, Asn119, and Asp120. The Galactose-binding motif lies at 96–98 (QPD).

Belongs to the true venom lectin family. As to quaternary structure, homodimer; disulfide-linked. As to expression, expressed by the venom gland.

It localises to the secreted. Functionally, this lectin displays hemagglutinating activity on dog (128'000 HU/mg) and cat erythrocytes, that is inhibited by beta-galactosides (D-galactose, D-lactose, and N-acetyl-D-galactosamine) and EDTA. In addition, has been shown to hemagglutinate promastigote forms of Leishmania amazonensis. Also inhibits Gram-positive (S.aureus ATCC 25923) (MIC is 31.25 ug/ml) but not Gram-negative (E.coli ATCC 25922) bacteria. Is a calcium-dependent lectin. The protein is C-type lectin BpLec of Bothrops pauloensis (Neuwied's lancehead).